We begin with the raw amino-acid sequence, 318 residues long: MSVWAIGDLQGCYDITQRLLEKINFDPAQDTLWFCGDLVNRGGQSLETLRLVHSLRAHSVVVLGNHDLSLLAIGARSEEEQRKVNPDLLRIVMAEDRDALLDWLRMQKLAHVDRTLGWMMIHAGLAPKWTTQMAEKHAREVEQQLQGGGYRKLLRNMYGDQPGWSPGLSGYDRSRAIINLFTRMRYCTPRGRIATDDKGTPGTQAQGLYPWFEVPGRVERDLKIVCGHWSALGLTITQGVHAIDTGAVWGGKLTALQLDSEELRVVQVPGREVTGPAPVARAPRRPRERQGRQRSRGNRGNAGNAAAGPKPSVDTPQD.

The segment at 269–318 (PGREVTGPAPVARAPRRPRERQGRQRSRGNRGNAGNAAAGPKPSVDTPQD) is disordered. Positions 282 to 297 (APRRPRERQGRQRSRG) are enriched in basic residues. Low complexity predominate over residues 298-311 (NRGNAGNAAAGPKP).

This sequence belongs to the Ap4A hydrolase family.

It carries out the reaction P(1),P(4)-bis(5'-adenosyl) tetraphosphate + H2O = 2 ADP + 2 H(+). Functionally, hydrolyzes diadenosine 5',5'''-P1,P4-tetraphosphate to yield ADP. The polypeptide is Bis(5'-nucleosyl)-tetraphosphatase, symmetrical (Xanthomonas euvesicatoria pv. vesicatoria (strain 85-10) (Xanthomonas campestris pv. vesicatoria)).